We begin with the raw amino-acid sequence, 366 residues long: Isocitrate dehydrogenase [NAD] subunit alpha, mitochondrial (366 aa).

The N-terminal 27 residues, 1-27 (MAGPAWISKVSRLLGAFHNQKQVTRGF), are a transit peptide targeting the mitochondrion. An N6-succinyllysine modification is found at Lys77. A Phosphothreonine modification is found at Thr101. 3 residues coordinate substrate: Arg115, Arg125, and Arg146. Residue Lys223 is modified to N6-acetyllysine. Mg(2+) contacts are provided by Asp233, Asp257, and Asp261. Lys343 bears the N6-acetyllysine; alternate mark. Residue Lys343 is modified to N6-succinyllysine; alternate. Lys350 bears the N6-succinyllysine mark.

This sequence belongs to the isocitrate and isopropylmalate dehydrogenases family. As to quaternary structure, heterooligomer of subunits alpha (IDH3A), beta (IDH3B), and gamma (IDH3G) in the apparent ratio of 2:1:1. The heterodimer containing one IDH3A and one IDH3B subunit and the heterodimer containing one IDH3A and one IDH3G subunit assemble into a heterotetramer (which contains two subunits of IDH3A, one of IDH3B and one of IDH3G) and further into the heterooctamer. Mg(2+) is required as a cofactor. The cofactor is Mn(2+).

The protein localises to the mitochondrion. It carries out the reaction D-threo-isocitrate + NAD(+) = 2-oxoglutarate + CO2 + NADH. Its activity is regulated as follows. The heterotetramer and the heterodimer composed of IDH3A and IDH3G subunits can be allosterically activated by citrate (CIT) or/and ADP, and the two activators can act independently or synergistically. The heterodimer composed of IDH3A and IDH3B subunits cannot be allosterically regulated and the allosteric regulation of the heterotetramer is through the IDH3G subunit and not the IDH3B subunit. The IDH3G subunit contains the allosteric site which consists of a CIT-binding site and an ADP-binding site, and the binding of CIT and ADP causes conformational changes at the allosteric site which are transmitted to the active site in the catalytic subunit (IDH3A) through a cascade of conformational changes at the heterodimer interface, leading to stabilization of the isocitrate-binding at the active site and thus activation of the enzyme. ATP can activate the heterotetramer and the heterodimer composed of IDH3A and IDH3G subunits at low concentrations but inhibits their activities at high concentrations, whereas ATP exhibits only inhibitory effect on the heterodimer composed of IDH3A and IDH3B subunits. Functionally, catalytic subunit of the enzyme which catalyzes the decarboxylation of isocitrate (ICT) into alpha-ketoglutarate. The heterodimer composed of the alpha (IDH3A) and beta (IDH3B) subunits and the heterodimer composed of the alpha (IDH3A) and gamma (IDH3G) subunits, have considerable basal activity but the full activity of the heterotetramer (containing two subunits of IDH3A, one of IDH3B and one of IDH3G) requires the assembly and cooperative function of both heterodimers. This Bos taurus (Bovine) protein is Isocitrate dehydrogenase [NAD] subunit alpha, mitochondrial.